A 375-amino-acid polypeptide reads, in one-letter code: Alcohol dehydrogenase 3, mitochondrial (375 aa).

The N-terminal 24 residues, 1-24 (MLRTSTLFTRRVQPSLFSRNILRL), are a transit peptide targeting the mitochondrion. Cys-71 contacts Zn(2+). Residues His-72, Thr-73, and His-76 each coordinate NAD(+). Residues His-94, Glu-95, Cys-125, Cys-128, Cys-131, Cys-139, and Cys-181 each contribute to the Zn(2+) site. NAD(+) is bound by residues Gly-208, Gly-209, Leu-210, Asp-229, Lys-234, Phe-249, Val-296, Ser-321, Val-323, and Arg-368.

The protein belongs to the zinc-containing alcohol dehydrogenase family. As to quaternary structure, homotetramer. The cofactor is Zn(2+).

The protein localises to the mitochondrion matrix. It localises to the mitochondrion inner membrane. The enzyme catalyses a primary alcohol + NAD(+) = an aldehyde + NADH + H(+). It carries out the reaction a secondary alcohol + NAD(+) = a ketone + NADH + H(+). It catalyses the reaction ethanol + NAD(+) = acetaldehyde + NADH + H(+). The catalysed reaction is butan-1-ol + NAD(+) = butanal + NADH + H(+). The enzyme catalyses hexan-1-ol + NAD(+) = hexanal + NADH + H(+). Its function is as follows. Mitochondrial isozyme that reduces acetaldehyde to ethanol during the fermentation of glucose. Involved in the shuttling of mitochondrial reducing equivalents to the cytosol, where the redox balance is restored by NADH dehydrogenases on the external side of the mitochondrial inner membrane. Shows a high affinity for alcohols with a double bond conjugated to the alcohol group. The sequence is that of Alcohol dehydrogenase 3, mitochondrial (ADH3) from Saccharomyces cerevisiae (strain ATCC 204508 / S288c) (Baker's yeast).